We begin with the raw amino-acid sequence, 594 residues long: Aspartate--tRNA(Asp/Asn) ligase (594 aa).

E173 contributes to the L-aspartate binding site. Residues 197–200 are aspartate; sequence QLFK. Position 219 (R219) interacts with L-aspartate. ATP contacts are provided by residues 219 to 221 and Q228; that span reads RDE. L-aspartate is bound at residue H451. Residue E485 coordinates ATP. R492 lines the L-aspartate pocket. 537–540 serves as a coordination point for ATP; sequence GWDR. The tract at residues 566-594 is disordered; that stretch reads PLTDAPAPITAQQRKESGIDAQPKRVQQA.

Belongs to the class-II aminoacyl-tRNA synthetase family. Type 1 subfamily. As to quaternary structure, homodimer.

It is found in the cytoplasm. It catalyses the reaction tRNA(Asx) + L-aspartate + ATP = L-aspartyl-tRNA(Asx) + AMP + diphosphate. Its function is as follows. Aspartyl-tRNA synthetase with relaxed tRNA specificity since it is able to aspartylate not only its cognate tRNA(Asp) but also tRNA(Asn). Reaction proceeds in two steps: L-aspartate is first activated by ATP to form Asp-AMP and then transferred to the acceptor end of tRNA(Asp/Asn). The polypeptide is Aspartate--tRNA(Asp/Asn) ligase (Mycobacterium tuberculosis (strain CDC 1551 / Oshkosh)).